The following is a 614-amino-acid chain: Phragmoplastin DRP1C (614 aa).

One can recognise a Dynamin-type G domain in the interval 32-301 (WEALPTVAVV…LETVIRQKIP (270 aa)). A G1 motif region spans residues 42 to 49 (GGQSSGKS). 45–50 (SSGKSS) is a GTP binding site. Residues 68–70 (VTR) are G2 motif. Positions 143–146 (DLPG) are G3 motif. The interval 212 to 215 (TKLD) is G4 motif. GTP is bound by residues 213–218 (KLDIMD) and 243–246 (NRSQ). The tract at residues 242 to 245 (VNRS) is G5 motif. A disordered region spans residues 499–519 (EPEKEKPNPRNAPAPNADPYS). A compositionally biased stretch (low complexity) spans 507-517 (PRNAPAPNADP). A GED domain is found at 523–614 (FRKIGSNVSA…RDDIDAVAWK (92 aa)).

This sequence belongs to the TRAFAC class dynamin-like GTPase superfamily. Dynamin/Fzo/YdjA family. In terms of assembly, forms homodimer and may homooligomerize and heterooligomerize to form the phragmoplastin complex. Binds to PHIP1. As to expression, ubiquitous.

Its subcellular location is the cytoplasm. It is found in the cytoskeleton. The protein resides in the cell cortex. It localises to the cytoplasmic vesicle. The protein localises to the clathrin-coated vesicle. Its subcellular location is the phragmoplast. The catalysed reaction is GTP + H2O = GDP + phosphate + H(+). Microtubule-associated force-producing protein that is targeted to the growing edges of the cell plate during cytokinesis. Also plays a major role in plasma membrane maintenance during pollen maturation. Has a GTPase activity. This is Phragmoplastin DRP1C from Arabidopsis thaliana (Mouse-ear cress).